The primary structure comprises 677 residues: Polyunsaturated fatty acid lipoxygenase ALOX15B (677 aa).

In terms of domain architecture, PLAT spans 2-125 (AKFRVRVSTG…ELVLREGAAK (124 aa)). Ca(2+)-binding residues include Gly15, Gly17, Asp39, His40, Gly42, Glu44, Asp86, and Ala87. Residues 126–677 (VSWQDHHRTL…PPLIENSVSI (552 aa)) form the Lipoxygenase domain. The Fe cation site is built by His374, His379, His554, and Ile677.

This sequence belongs to the lipoxygenase family. The cofactor is Fe cation.

The protein localises to the cytoplasm. The protein resides in the cytosol. It is found in the cell membrane. It localises to the cytoskeleton. Its subcellular location is the membrane. The protein localises to the cell junction. The protein resides in the adherens junction. It is found in the focal adhesion. It localises to the nucleus. It carries out the reaction (5Z,8Z,11Z,14Z)-eicosatetraenoate + O2 = (15S)-hydroperoxy-(5Z,8Z,11Z,13E)-eicosatetraenoate. It catalyses the reaction (9Z,12Z)-octadecadienoate + O2 = 13-hydroperoxy-(9Z,11E)-octadecadienoate. The enzyme catalyses (5S)-hydroxy-(6E,8Z,11Z,14Z)-eicosatetraenoate + O2 = (5S)-hydroxy-(15S)-hydroperoxy-(6E,8Z,11Z,13E)-eicosatetraenoate. The catalysed reaction is (5Z,8Z,11Z,14Z)-eicosatetraenoate + O2 = 5-hydroperoxy-(6E,8Z,11Z,14Z)-eicosatetraenoate. It carries out the reaction (5S,6R)-dihydroxy-(7E,9E,11Z,14Z)-eicosatetraenoate + O2 = (5S,6R)-dihydroxy-(15S)-hydroperoxy-(7E,9E,11Z,13E)-eicosatetraenoate. It catalyses the reaction (5S)-hydroperoxy-(6E,8Z,11Z,14Z)-eicosatetraenoate + O2 = (5S,15S)-dihydroperoxy-(6E,8Z,11Z,13E)-eicosatetraenoate. The enzyme catalyses 2-(5Z,8Z,11Z,14Z-eicosatetraenoyl)-glycerol + O2 = 2-[15(S)-hydroperoxy-(5Z,8Z,11Z,13E)-eicosatetraenoyl]-glycerol. The catalysed reaction is (8S)-hydroperoxy-(5Z,9E,11Z,14Z)-eicosatetraenoate + O2 = (8S,15S)-dihydroperoxy-(5Z,9E,11Z,13E)-eicosatetraenoate. It carries out the reaction N-(5Z,8Z,11Z,14Z)-eicosatetraenoyl-L-alanine + O2 = N-(15S)-hydroperoxy-(5Z,8Z,11Z,13E)-eicosatetraenoyl-alanine. It catalyses the reaction N-(5Z,8Z,11Z,14Z)-eicosatetraenoyl-gamma-aminobutanoate + O2 = N-(15S)-hydroperoxy-(5Z,8Z,11Z,13E)-eicosatetraenoyl-gamma-aminobutanoate. The enzyme catalyses N-(5Z,8Z,11Z,14Z)-eicosatetraenoyl-glycine + O2 = N-(15S)-hydroperoxy-(5Z,8Z,11Z,13E)-eicosatetraenoyl-glycine. The catalysed reaction is N-(5Z,8Z,11Z,14Z)-eicosatetraenoyl-taurine + O2 = N-(15S)-hydroperoxy-(5Z,8Z,11Z,13E)-eicosatetraenoyl-taurine. It carries out the reaction 2-(5Z,8Z,11Z,14Z-eicosatetraenoyl)-glycerol + O2 = 2-[12-hydroperoxy-(5Z,8Z,10E,14Z)-eicosatetraenoyl]-glycerol. It catalyses the reaction 1-octadecanoyl-2-(5Z,8Z,11Z,14Z-eicosatetraenoyl)-sn-glycero-3-phosphocholine + O2 = 1-octadecanoyl-2-(15-hydroperoxy-5Z,8Z,11Z,13E-eicosatetraenoyl)-sn-glycero-3-phosphocholine. The enzyme catalyses a 1-acyl-2-(5Z,8Z,11Z,14Z-eicosatetraenoyl)-sn-glycero-3-phospho-(1D-myo-inositol) + O2 = a 1-acyl-2-(15-hydroperoxy-5Z,8Z,11Z,13E-eicosatetraenoyl)-sn-glycero-3-phospho-(1D-myo-inositol). The catalysed reaction is a 1-acyl-2-(8Z,11Z,14Z-eicosatrienoyl)-sn-glycero-3-phospho-(1D-myo-inositol) + O2 = a 1-acyl-2-(15-hydroperoxy-8Z,11Z,13E-eicosatrienoyl)-sn-glycero-3-phospho-(1D-myo-inositol). It carries out the reaction 1-octadecanoyl-2-(5Z,8Z,11Z,14Z)-eicosatetraenoyl-sn-glycero-3-phosphoethanolamine + O2 = 1-octadecanoyl-2-(15-hydroperoxy-5Z,8Z,11Z,13E-eicosatetraenoyl)-sn-glycero-3-phosphoethanolamine. It catalyses the reaction 1-octadecanoyl-2-(5Z,8Z,11Z,14Z-eicosatetraenoyl)-sn-glycero-3-phospho-(1D-myo-inositol) + O2 = 1-octadecanoyl-2-(15-hydroperoxy-5Z,8Z,11Z,13E-eicosatetraenoyl)-sn-glycero-3-phospho-(1D-myo-inositol). The enzyme catalyses (8Z,11Z,14Z)-eicosatrienoate + O2 = 15-hydroperoxy-(8Z,11Z,13E)-eicosatrienoate. The catalysed reaction is (7S)-hydroperoxy-(4Z,8E,10Z,13Z,16Z,19Z)-docosahexaenoate + O2 = (7S,17S)-dihydroperoxy-(4Z,8E,10Z,13Z,15E,19Z)-docosahexaenoate. Its pathway is lipid metabolism; hydroperoxy eicosatetraenoic acid biosynthesis. In terms of biological role, non-heme iron-containing dioxygenase that catalyzes the stereo-specific peroxidation of free and esterified polyunsaturated fatty acids (PUFAs) generating a spectrum of bioactive lipid mediators. Inserts a peroxyl group at C15 of arachidonate ((5Z,8Z,11Z,14Z)-eicosatetraenoate) producing (15S)-hydroperoxyeicosatetraenoate/(15S)-HPETE. Also peroxidizes linoleate ((9Z,12Z)-octadecadienoate) to 13-hydroperoxyoctadecadienoate/13-HPODE. Oxygenates arachidonyl derivatives such as 2-arachidonoylglycerol (2-AG) leading to the production and extracellular release of 15-hydroxyeicosatetraenoyl glycerol (15-HETE-G) that acts as a peroxisome proliferator-activated receptor alpha agonist. Has the ability to efficiently class-switch ALOX5 pro-inflammatory mediators into anti-inflammatory intermediates. Participates in the sequential oxidations of DHA ((4Z,7Z,10Z,13Z,16Z,19Z)-docosahexaenoate) to generate specialized pro-resolving mediators (SPMs) resolvin D5 ((7S,17S)-diHPDHA), which can actively down-regulate the immune response and have anti-aggregation properties with platelets. In addition to free PUFAs hydrolyzed from phospholipids, it directly oxidizes PUFAs esterified to membrane-bound phospholipids. Has no detectable 8S-lipoxygenase activity on arachidonate but reacts with (8S)-HPETE to produce (8S,15S)-diHPETE. May regulate progression through the cell cycle and cell proliferation. May also regulate cytokine secretion by macrophages and therefore play a role in the immune response. May also regulate macrophage differentiation into proatherogenic foam cells. The sequence is that of Polyunsaturated fatty acid lipoxygenase ALOX15B from Rattus norvegicus (Rat).